A 227-amino-acid polypeptide reads, in one-letter code: Phosphoribosylformylglycinamidine synthase subunit PurQ (227 aa).

The 223-residue stretch at 3-225 (FAVIVFPGSN…LKQWRETYVV (223 aa)) folds into the Glutamine amidotransferase type-1 domain. Catalysis depends on C86, which acts as the Nucleophile. Residues H194 and E196 contribute to the active site.

Part of the FGAM synthase complex composed of 1 PurL, 1 PurQ and 2 PurS subunits.

Its subcellular location is the cytoplasm. It catalyses the reaction N(2)-formyl-N(1)-(5-phospho-beta-D-ribosyl)glycinamide + L-glutamine + ATP + H2O = 2-formamido-N(1)-(5-O-phospho-beta-D-ribosyl)acetamidine + L-glutamate + ADP + phosphate + H(+). The enzyme catalyses L-glutamine + H2O = L-glutamate + NH4(+). Its pathway is purine metabolism; IMP biosynthesis via de novo pathway; 5-amino-1-(5-phospho-D-ribosyl)imidazole from N(2)-formyl-N(1)-(5-phospho-D-ribosyl)glycinamide: step 1/2. Functionally, part of the phosphoribosylformylglycinamidine synthase complex involved in the purines biosynthetic pathway. Catalyzes the ATP-dependent conversion of formylglycinamide ribonucleotide (FGAR) and glutamine to yield formylglycinamidine ribonucleotide (FGAM) and glutamate. The FGAM synthase complex is composed of three subunits. PurQ produces an ammonia molecule by converting glutamine to glutamate. PurL transfers the ammonia molecule to FGAR to form FGAM in an ATP-dependent manner. PurS interacts with PurQ and PurL and is thought to assist in the transfer of the ammonia molecule from PurQ to PurL. The protein is Phosphoribosylformylglycinamidine synthase subunit PurQ of Bacillus cereus (strain Q1).